The following is a 126-amino-acid chain: Holo-[acyl-carrier-protein] synthase (126 aa).

Mg(2+) is bound by residues aspartate 9 and glutamate 58.

The protein belongs to the P-Pant transferase superfamily. AcpS family. Mg(2+) is required as a cofactor.

The protein localises to the cytoplasm. The enzyme catalyses apo-[ACP] + CoA = holo-[ACP] + adenosine 3',5'-bisphosphate + H(+). Transfers the 4'-phosphopantetheine moiety from coenzyme A to a Ser of acyl-carrier-protein. This chain is Holo-[acyl-carrier-protein] synthase, found in Escherichia coli (strain ATCC 8739 / DSM 1576 / NBRC 3972 / NCIMB 8545 / WDCM 00012 / Crooks).